The following is a 459-amino-acid chain: Interleukin-7 receptor subunit alpha (459 aa).

The first 20 residues, 1–20, serve as a signal peptide directing secretion; it reads MTILGTTFGVFFSLLQVVSG. The Extracellular segment spans residues 21–241; the sequence is ESGYAQNGDL…NNHSGETNPT (221 aa). Cysteine 42 and cysteine 57 are disulfide-bonded. Asparagine 49 and asparagine 65 each carry an N-linked (GlcNAc...) asparagine glycan. Intrachain disulfides connect cysteine 74/cysteine 82 and cysteine 108/cysteine 118. One can recognise a Fibronectin type-III domain in the interval 131–231; sequence APFDLSVIYR…PSYYFRTPEI (101 aa). The N-linked (GlcNAc...) asparagine glycan is linked to asparagine 182. A WSXWS motif motif is present at residues 217–221; sequence WSEWS. Residues 242–262 traverse the membrane as a helical segment; sequence LLTISILSVLSVVLLVILACV. Topologically, residues 263–459 are cytoplasmic; the sequence is LWKKRIKPII…VTMSSFCQKR (197 aa). The Box 1 motif motif lies at 272–280; sequence IWPSLPDHK. A Phosphothreonine; by PKC modification is found at threonine 282. Residues 327-357 are disordered; that stretch reads TVPPQLEESETQRPGGDVQSPSWPSENVVTT. Over residues 345–357 the composition is skewed to polar residues; that stretch reads QSPSWPSENVVTT.

It belongs to the type I cytokine receptor family. Type 4 subfamily. As to quaternary structure, the IL7 receptor is a heterodimer of IL7R and IL2RG. The TSLP receptor is a heterodimer of CRLF2 and IL7R. Interacts with CD53. Post-translationally, N-glycosylated IL-7Ralpha binds IL7 300-fold more tightly than the unglycosylated form. Ubiquitinated by MARCHF8; leading to lysosomal degradation.

The protein localises to the cell membrane. In terms of biological role, receptor for interleukin-7. Also acts as a receptor for thymic stromal lymphopoietin (TSLP). The polypeptide is Interleukin-7 receptor subunit alpha (IL7R) (Callithrix jacchus (White-tufted-ear marmoset)).